The sequence spans 157 residues: Small ribosomal subunit protein uS7 (157 aa).

This sequence belongs to the universal ribosomal protein uS7 family. Part of the 30S ribosomal subunit. Contacts proteins S9 and S11.

Its function is as follows. One of the primary rRNA binding proteins, it binds directly to 16S rRNA where it nucleates assembly of the head domain of the 30S subunit. Is located at the subunit interface close to the decoding center, probably blocks exit of the E-site tRNA. This is Small ribosomal subunit protein uS7 from Borreliella burgdorferi (strain ATCC 35210 / DSM 4680 / CIP 102532 / B31) (Borrelia burgdorferi).